Here is a 218-residue protein sequence, read N- to C-terminus: Large ribosomal subunit protein uL2c (218 aa).

Positions glycine 165–proline 192 are disordered.

It belongs to the universal ribosomal protein uL2 family. In terms of assembly, part of the 50S ribosomal subunit.

The protein localises to the plastid. Its subcellular location is the chloroplast. The protein is Large ribosomal subunit protein uL2c (rpl2) of Bigelowiella natans (Pedinomonas minutissima).